The chain runs to 544 residues: MAKRIIYNENARRALEKGIDILAESVAVTLGPKGRNVVLEKKFGAPQIINDGVTIAKEIELEDHIENTGVALIRQAASKTNDAAGDGTTTATVLAHAMVKAGLRNVAAGANAITLKKGIDKASDFLVAEIKDKANPISDSNAIAQVGTISAGNDEEVGRMIADAMDKVGKEGVISLEEGKSMTTELEVTEGMRFDKGYISPYFATDTERMEAVLDEPYILLTDKKIGLVQDLVPVLEQIARTGKPLLIIAEDIEKEALATLVVNRLRGVLNVAAVKAPGFGDRRKAMLEDMAVLTNGQLITEDAGLKLENAKIEMLGTARRVTINKDTTTIVAEGNEVAVQARCEQIKKQMDETESTYDKEKLQERLAKLAGGVAVVKVGAATETEMKDKKLRLEDAINATKAAVEEGIVPGGGTTLAHLAPALEQWAASTLSGEELIGANIVAAALTAPLMRIAENAGVNGAVVAENVKAKSFNEGYNAANGDYVDMLAAGIVDPAKVTRSGLQNAASIAGMVLTTECIVADLPEKKEAAPAGGGMGGGDFDY.

Residues 29–32 (TLGP), 86–90 (DGTTT), G413, 479–481 (NAA), and D495 contribute to the ATP site.

Belongs to the chaperonin (HSP60) family. Forms a cylinder of 14 subunits composed of two heptameric rings stacked back-to-back. Interacts with the co-chaperonin GroES.

It is found in the cytoplasm. The enzyme catalyses ATP + H2O + a folded polypeptide = ADP + phosphate + an unfolded polypeptide.. Its function is as follows. Together with its co-chaperonin GroES, plays an essential role in assisting protein folding. The GroEL-GroES system forms a nano-cage that allows encapsulation of the non-native substrate proteins and provides a physical environment optimized to promote and accelerate protein folding. In Synechococcus sp. (strain WH7803), this protein is Chaperonin GroEL 2.